We begin with the raw amino-acid sequence, 338 residues long: Lipoate-protein ligase A (338 aa).

Residues 29 to 216 (PADQRVLFLW…AYCEHYQQQV (188 aa)) form the BPL/LPL catalytic domain. Residues R71, 76–79 (GAVF), and K134 each bind ATP. Residue K134 participates in (R)-lipoate binding.

This sequence belongs to the LplA family. In terms of assembly, monomer.

The protein localises to the cytoplasm. The catalysed reaction is L-lysyl-[lipoyl-carrier protein] + (R)-lipoate + ATP = N(6)-[(R)-lipoyl]-L-lysyl-[lipoyl-carrier protein] + AMP + diphosphate + H(+). Its pathway is protein modification; protein lipoylation via exogenous pathway; protein N(6)-(lipoyl)lysine from lipoate: step 1/2. The protein operates within protein modification; protein lipoylation via exogenous pathway; protein N(6)-(lipoyl)lysine from lipoate: step 2/2. In terms of biological role, catalyzes both the ATP-dependent activation of exogenously supplied lipoate to lipoyl-AMP and the transfer of the activated lipoyl onto the lipoyl domains of lipoate-dependent enzymes. The protein is Lipoate-protein ligase A of Vibrio cholerae serotype O1 (strain ATCC 39541 / Classical Ogawa 395 / O395).